The primary structure comprises 242 residues: uncharacterized protein (242 aa).

The next 2 helical transmembrane spans lie at 4–24 and 34–54; these read NYQV…YYVV and LLFG…WLFG. A glycan (N-linked (GlcNAc...) asparagine; by host) is linked at Asn-73. Transmembrane regions (helical) follow at residues 74 to 94, 106 to 126, and 162 to 182; these read YTIV…VIGY, VLTV…YGGF, and LDVF…FVMY. N-linked (GlcNAc...) asparagine; by host glycosylation is present at Asn-185. 2 helical membrane passes run 189–209 and 217–237; these read VIGL…APTL and CLLS…STGI.

Its subcellular location is the membrane. This is an uncharacterized protein from Acanthamoeba polyphaga mimivirus (APMV).